A 64-amino-acid polypeptide reads, in one-letter code: Large ribosomal subunit protein bL35 (64 aa).

Over residues 1-15 (MPKNKTHSGASKRFR) the composition is skewed to basic residues. Positions 1-20 (MPKNKTHSGASKRFRVTGSG) are disordered.

This sequence belongs to the bacterial ribosomal protein bL35 family.

This is Large ribosomal subunit protein bL35 from Nocardioides sp. (strain ATCC BAA-499 / JS614).